The sequence spans 386 residues: Putative gustatory receptor 92a (386 aa).

The Cytoplasmic segment spans residues 1–14 (MFEFLHQMSAPKLS). The chain crosses the membrane as a helical span at residues 15-35 (TSILRYIFRYAQFIGVIFFCL). At 36 to 79 (HTRKDDKTVFIRNWLKWLNVTHRIITFTRFFWVYIASISIKTNR) the chain is on the extracellular side. An N-linked (GlcNAc...) asparagine glycan is attached at Asn-54. A helical membrane pass occupies residues 80–100 (VLQVLHGMRLVLSIPNVAVIL). Over 101–141 (CYHIFRGPEIIDLINQFLRLFRQVSDLFKTKTPGFGGRREL) the chain is Cytoplasmic. The helical transmembrane segment at 142 to 162 (ILILLNLISFAHEQTYLWFTI) threads the bilayer. At 163-169 (RKGFSWR) the chain is on the extracellular side. Residues 170-190 (FLIDWWCDFYLVSATNIFIHI) form a helical membrane-spanning segment. Residues 191 to 256 (NSIGYLSLGV…YHTSIMFHKL (66 aa)) are Cytoplasmic-facing. The helical transmembrane segment at 257 to 277 (FVPLLFLALIYKVLLIALIGF) threads the bilayer. Residues 278-287 (NVAVEFYLNS) lie on the Extracellular side of the membrane. A helical transmembrane segment spans residues 288 to 308 (FIFWILLGKHVLDLFLVTVSV). The Cytoplasmic segment spans residues 309–356 (EGAVNQFLNIGMQFGNVGDLSKFQTTLDTLFLHLRLGHFRVSILGLFD). A helical membrane pass occupies residues 357-377 (VTQMQYLQFLSALLSGLAFIA). Topologically, residues 378-386 (QYRMQVGNG) are extracellular.

Belongs to the insect chemoreceptor superfamily. Gustatory receptor (GR) family. Gr93a subfamily.

It is found in the cell membrane. In terms of biological role, probable gustatory receptor which mediates acceptance or avoidance behavior, depending on its substrates. The polypeptide is Putative gustatory receptor 92a (Gr92a) (Drosophila melanogaster (Fruit fly)).